Here is a 279-residue protein sequence, read N- to C-terminus: Phospholipase A and acyltransferase 5 (279 aa).

Disordered stretches follow at residues 1-53 (MGLS…GLNS) and 70-117 (QLPA…ENEG). The segment covering 97–106 (LETTPSQKAD) has biased composition (polar residues). The 115-residue stretch at 135 to 249 (LIEIFRIGYE…LRYGVPRSQQ (115 aa)) folds into the LRAT domain. Catalysis depends on residues H145 and H157. The Acyl-thioester intermediate role is filled by C233.

It belongs to the H-rev107 family. In terms of tissue distribution, highest expression level in testis and pancreas.

Its subcellular location is the cytoplasm. It is found in the cytosol. It catalyses the reaction a 1,2-diacyl-sn-glycero-3-phosphocholine + H2O = a 1-acyl-sn-glycero-3-phosphocholine + a fatty acid + H(+). The enzyme catalyses a 1,2-diacyl-sn-glycero-3-phosphocholine + H2O = a 2-acyl-sn-glycero-3-phosphocholine + a fatty acid + H(+). The catalysed reaction is 1-hexadecanoyl-2-(5Z,8Z,11Z,14Z-eicosatetraenoyl)-sn-glycero-3-phosphocholine + 1,2-di-(9Z-octadecenoyl)-sn-glycero-3-phosphoethanolamine = N-(5Z,8Z,11Z,14Z-eicosatetraenoyl)-1,2-di-(9Z-octadecenoyl)-sn-glycero-3-phosphoethanolamine + 1-hexadecanoyl-sn-glycero-3-phosphocholine + H(+). It carries out the reaction 1,2-di-(9Z-octadecenoyl)-sn-glycero-3-phosphoethanolamine + 1,2-dihexadecanoyl-sn-glycero-3-phosphocholine = N-hexadecanoyl-1,2-di-(9Z-octadecenoyl)-sn-glycero-3-phosphoethanolamine + 1-hexadecanoyl-sn-glycero-3-phosphocholine + H(+). It catalyses the reaction 1,2-di-(9Z-octadecenoyl)-sn-glycero-3-phosphoethanolamine + 1,2-dihexadecanoyl-sn-glycero-3-phosphocholine = N-hexadecanoyl-1,2-di-(9Z-octadecenoyl)-sn-glycero-3-phosphoethanolamine + 2-hexadecanoyl-sn-glycero-3-phosphocholine + H(+). The enzyme catalyses a 1,2-diacyl-sn-glycero-3-phosphoethanolamine + a 1,2-diacyl-sn-glycero-3-phosphocholine = an N-acyl-1,2-diacyl-sn-glycero-3-phosphoethanolamine + a 1-acyl-sn-glycero-3-phosphocholine + H(+). The catalysed reaction is a 1,2-diacyl-sn-glycero-3-phosphoethanolamine + a 1,2-diacyl-sn-glycero-3-phosphocholine = an N-acyl-1,2-diacyl-sn-glycero-3-phosphoethanolamine + a 2-acyl-sn-glycero-3-phosphocholine + H(+). It carries out the reaction 1-hexadecanoyl-2-(9Z-octadecenoyl)-sn-glycero-3-phosphocholine + 1,2-di-(9Z-octadecenoyl)-sn-glycero-3-phosphoethanolamine = N,1,2-tri-(9Z-octadecenoyl)-sn-glycero-3-phosphoethanolamine + 1-hexadecanoyl-sn-glycero-3-phosphocholine + H(+). Exhibits both phospholipase A1/2 and acyltransferase activities. Shows phospholipase A1 (PLA1) and A2 (PLA2) activity, catalyzing the calcium-independent release of fatty acids from the sn-1 or sn-2 position of glycerophospholipids. Shows N-acyltransferase activity, catalyzing the calcium-independent transfer of a fatty acyl group at the sn-1 position of phosphatidylcholine (PC) and other glycerophospholipids to the primary amine of phosphatidylethanolamine (PE), forming N-acylphosphatidylethanolamine (NAPE), which serves as precursor for N-acylethanolamines (NAEs). The polypeptide is Phospholipase A and acyltransferase 5 (Homo sapiens (Human)).